The following is a 707-amino-acid chain: MSSALRSRARSASLGTTTEGWDPPPLRRPSRARRRQWMREAAQAAAQAAVQAAQAAAAQVAQAHVDEDEVVDLMADEAGGGVTTLTTLSSVSTTTVLGHATFSACVRNDVMRDGEKEDAASDKENLRRPVVPSTSSRGSAASGDGYHGLRCRETSAMWSFEYDRDGDVTSVRRALFTGGSDPSDSVSGVRGGRKRPLRPPLVSLARTPLCRRRVGGVDAVLEENDVELRAESQDSAVASGPGRVPQPLSGSSGEESATAVEADSTSHDDVHCTCSNDQIITTSIRGLTCDPRMFLRLTHPELCELSISYLLVYVPKEDDFCHKICYAVDMSDESYRLGQGSFGEVWPLDRYRVVKVARKHSETVLTVWMSGLIRTRAAGEQQQPPSLVGTGVHRGLLTATGCCLLHNVTVHRRFHTDMFHHDQWKLACIDSYRRAFCTLADAIKFLNHQCRVCHFDITPMNVLIDVNPHNPSEIVRAALCDYSLSEPYPDYNERCVAVFQETGTARRIPNCSHRLRECYHPAFRPMPLQKLLICDPHARFPVAGLRRYCMSELSALGNVLGFCLMRLLDRRGLDEVRMGTEALLFKHAGAACRALENGKLTHCSDACLLILAAQMSYGACLLGEHGAALVSHTLRFVEAKMSSCRVRAFRRFYHECSQTMLHEYVRKNVERLLATSDGLYLYNAFRRTTSIICEEDLDGDCRQLFPE.

Residues 1–14 (MSSALRSRARSASL) show a composition bias toward low complexity. Disordered regions lie at residues 1–32 (MSSA…PSRA), 115–146 (EKED…GDGY), 176–199 (FTGG…PLRP), and 231–264 (ESQD…EADS). Over residues 115 to 127 (EKEDAASDKENLR) the composition is skewed to basic and acidic residues. A compositionally biased stretch (low complexity) spans 178–188 (GGSDPSDSVSG). Residues 337–345 (LGQGSFGEV) and Lys-359 contribute to the ATP site. The active-site Proton acceptor is the Asp-456.

This sequence belongs to the protein kinase superfamily. Tyr protein kinase family. HCMV ganciclovir subfamily. Interacts with UL83. Autophosphorylates on serine and threonine residues.

Its subcellular location is the virion. The catalysed reaction is L-seryl-[protein] + ATP = O-phospho-L-seryl-[protein] + ADP + H(+). The enzyme catalyses L-threonyl-[protein] + ATP = O-phospho-L-threonyl-[protein] + ADP + H(+). Its function is as follows. Serine/threonine protein kinase that plays important roles in several processes including nuclear viral egress, viral replication or regulation of host cell cycle progression. Participates in the acquisition of tegument during virion morphogenesis in the nucleus. Redistributes the host nuclear lamina by phosphorylating cellular Lamins-A/C. Plays a role in viral DNA synthesis by phosphorylating the DNA polymerase processivity factor UL44. Stimulates host cell cycle to support viral DNA synthesis by phosphorylating host retinoblastoma/RB1 protein. Additional substrates have been identified including host EF1D or H2B. Also phosphorylates host SAMHD1 and thereby counteracts its antiviral effect by reducing its dNTP hydrolase activity. This chain is Serine/threonine protein kinase UL97 (UL97), found in Human cytomegalovirus (strain Towne) (HHV-5).